The following is a 104-amino-acid chain: Large ribosomal subunit protein uL24 (104 aa).

This sequence belongs to the universal ribosomal protein uL24 family. Part of the 50S ribosomal subunit.

Its function is as follows. One of two assembly initiator proteins, it binds directly to the 5'-end of the 23S rRNA, where it nucleates assembly of the 50S subunit. One of the proteins that surrounds the polypeptide exit tunnel on the outside of the subunit. The sequence is that of Large ribosomal subunit protein uL24 from Rhodopseudomonas palustris (strain BisB18).